The chain runs to 469 residues: UDP-N-acetylmuramate--L-alanine ligase (469 aa).

114-120 (GTHGKTT) lines the ATP pocket.

This sequence belongs to the MurCDEF family.

Its subcellular location is the cytoplasm. It catalyses the reaction UDP-N-acetyl-alpha-D-muramate + L-alanine + ATP = UDP-N-acetyl-alpha-D-muramoyl-L-alanine + ADP + phosphate + H(+). Its pathway is cell wall biogenesis; peptidoglycan biosynthesis. In terms of biological role, cell wall formation. The polypeptide is UDP-N-acetylmuramate--L-alanine ligase (Chlorobium phaeovibrioides (strain DSM 265 / 1930) (Prosthecochloris vibrioformis (strain DSM 265))).